The sequence spans 217 residues: 3-dehydroquinate dehydratase (217 aa).

Residues 26–28 (EFR) and Arg-59 contribute to the 3-dehydroquinate site. His-114 functions as the Proton donor/acceptor in the catalytic mechanism. Lys-140 (schiff-base intermediate with substrate) is an active-site residue. 3-dehydroquinate contacts are provided by Arg-178 and Gln-201.

It belongs to the type-I 3-dehydroquinase family. In terms of assembly, homodimer.

It catalyses the reaction 3-dehydroquinate = 3-dehydroshikimate + H2O. It participates in metabolic intermediate biosynthesis; chorismate biosynthesis; chorismate from D-erythrose 4-phosphate and phosphoenolpyruvate: step 3/7. Its function is as follows. Involved in the third step of the chorismate pathway, which leads to the biosynthesis of aromatic amino acids. Catalyzes the cis-dehydration of 3-dehydroquinate (DHQ) and introduces the first double bond of the aromatic ring to yield 3-dehydroshikimate. The polypeptide is 3-dehydroquinate dehydratase (Hydrogenobaculum sp. (strain Y04AAS1)).